Consider the following 509-residue polypeptide: Photosystem II CP47 reaction center protein (509 aa).

6 helical membrane-spanning segments follow: residues A21–S36, I101–W115, G140–F156, I203–S218, V237–V253, and S458–R473.

Belongs to the PsbB/PsbC family. PsbB subfamily. PSII is composed of 1 copy each of membrane proteins PsbA, PsbB, PsbC, PsbD, PsbE, PsbF, PsbH, PsbI, PsbJ, PsbK, PsbL, PsbM, PsbT, PsbX, PsbY, PsbZ, Psb30/Ycf12, at least 3 peripheral proteins of the oxygen-evolving complex and a large number of cofactors. It forms dimeric complexes. The cofactor is Binds multiple chlorophylls. PSII binds additional chlorophylls, carotenoids and specific lipids..

Its subcellular location is the plastid. The protein resides in the chloroplast thylakoid membrane. Functionally, one of the components of the core complex of photosystem II (PSII). It binds chlorophyll and helps catalyze the primary light-induced photochemical processes of PSII. PSII is a light-driven water:plastoquinone oxidoreductase, using light energy to abstract electrons from H(2)O, generating O(2) and a proton gradient subsequently used for ATP formation. The sequence is that of Photosystem II CP47 reaction center protein from Populus deltoides (Eastern poplar).